A 259-amino-acid chain; its full sequence is MSNQNDDTRVDLLGSDDFEKYLLYGSREIRQILQGLIDHHALITAQTVPGHQSFLTTVVALPDDGASIIIDAGPDEHINQRVGNAERLVCMSQLDKIRIQFDLSAPALTRYENRPAFRAPVPAQLLRLQRREFYRLQTPVTHTVTCRIPLPQPDGRTLELETRVIDISGGGIAVVVPPDNVPFGADMEFENCKLTLPELGTIPVRLKVRNLFRLTNRNGVEMLRAGCEFVDLPRSADNAIQRYIFKVERDRSARERGRL.

One can recognise a PilZ domain in the interval 129 to 246; the sequence is QRREFYRLQT…DNAIQRYIFK (118 aa).

Belongs to the YcgR family. In terms of assembly, monomer. Interacts with the flagellar basal bodies.

Its subcellular location is the bacterial flagellum basal body. Its function is as follows. Acts as a flagellar brake, regulating swimming and swarming in a bis-(3'-5') cyclic diguanylic acid (c-di-GMP)-dependent manner. Binds 1 c-di-GMP dimer per subunit. Increasing levels of c-di-GMP lead to decreased motility. In Azoarcus sp. (strain BH72), this protein is Flagellar brake protein YcgR.